Consider the following 162-residue polypeptide: Cytochrome B pre-mRNA-processing protein 6 (162 aa).

S2 is subject to N-acetylserine. Position 97 is a phosphothreonine (T97).

Its subcellular location is the mitochondrion. Its function is as follows. This protein is involved in processing of the 5' terminus and the intervening sequences of cytochrome b pre-mRNA. The polypeptide is Cytochrome B pre-mRNA-processing protein 6 (CBP6) (Saccharomyces cerevisiae (strain ATCC 204508 / S288c) (Baker's yeast)).